The sequence spans 845 residues: Translation initiation factor IF-2 (845 aa).

2 disordered regions span residues Arg45 to Ser91 and Glu127 to Val209. A compositionally biased stretch (polar residues) spans Ser81 to Ser91. The segment covering Thr137–Asn149 has biased composition (basic and acidic residues). Residues Pro151–Ser162 are compositionally biased toward polar residues. Over residues Thr179–His193 the composition is skewed to basic and acidic residues. The 170-residue stretch at Pro343 to Lys512 folds into the tr-type G domain. The G1 stretch occupies residues Gly352–Thr359. Residue Gly352–Thr359 participates in GTP binding. The G2 stretch occupies residues Gly377–His381. Residues Asp398 to Gly401 form a G3 region. GTP contacts are provided by residues Asp398–His402 and Asn452–Asp455. The tract at residues Asn452–Asp455 is G4. Residues Ser488–Lys490 form a G5 region.

Belongs to the TRAFAC class translation factor GTPase superfamily. Classic translation factor GTPase family. IF-2 subfamily.

Its subcellular location is the cytoplasm. Its function is as follows. One of the essential components for the initiation of protein synthesis. Protects formylmethionyl-tRNA from spontaneous hydrolysis and promotes its binding to the 30S ribosomal subunits. Also involved in the hydrolysis of GTP during the formation of the 70S ribosomal complex. The chain is Translation initiation factor IF-2 from Bartonella quintana (strain Toulouse) (Rochalimaea quintana).